The primary structure comprises 576 residues: Proteinaceous RNase P 3 (576 aa).

A compositionally biased stretch (basic and acidic residues) spans asparagine 65–proline 75. A disordered region spans residues asparagine 65–proline 88. PPR repeat units follow at residues proline 88 to leucine 123, glutamine 129 to proline 166, asparagine 167 to serine 201, and arginine 204 to leucine 238. The region spanning serine 335 to cysteine 570 is the PRORP domain. Residues cysteine 340 and cysteine 343 each coordinate Zn(2+). Residues aspartate 402, aspartate 480, aspartate 481, and aspartate 499 each coordinate Mn(2+). Zn(2+) is bound by residues histidine 553 and cysteine 570.

This sequence belongs to the PPR family. P subfamily. The cofactor is Mg(2+). Mn(2+) is required as a cofactor.

Its subcellular location is the nucleus. It catalyses the reaction Endonucleolytic cleavage of RNA, removing 5'-extranucleotides from tRNA precursor.. In terms of biological role, endonuclease RNase P responsible for the 5' maturation of tRNA precursors. Also involved in the maturation of mRNA and small nucleolar RNA (snoRNA). This is Proteinaceous RNase P 3 (PRORP3) from Arabidopsis thaliana (Mouse-ear cress).